An 863-amino-acid chain; its full sequence is Leucine--tRNA ligase (863 aa).

A 'HIGH' region motif is present at residues 42-52 (PYPSGKLHMGH). A 'KMSKS' region motif is present at residues 623–627 (KMSKS). K626 serves as a coordination point for ATP.

It belongs to the class-I aminoacyl-tRNA synthetase family.

It localises to the cytoplasm. The catalysed reaction is tRNA(Leu) + L-leucine + ATP = L-leucyl-tRNA(Leu) + AMP + diphosphate. This Paraburkholderia xenovorans (strain LB400) protein is Leucine--tRNA ligase.